The primary structure comprises 292 residues: Small ribosomal subunit protein uS9m (292 aa).

The interval 273 to 292 (VERKKPGKRKARKMPTWVKR) is disordered.

Belongs to the universal ribosomal protein uS9 family.

The protein localises to the mitochondrion. The chain is Small ribosomal subunit protein uS9m (MRPS9) from Kluyveromyces marxianus (Yeast).